The chain runs to 67 residues: Large ribosomal subunit protein uL29 (67 aa).

It belongs to the universal ribosomal protein uL29 family.

The polypeptide is Large ribosomal subunit protein uL29 (Staphylothermus marinus (strain ATCC 43588 / DSM 3639 / JCM 9404 / F1)).